A 389-amino-acid chain; its full sequence is Ankyrin repeat domain-containing protein 42 (389 aa).

A disordered region spans residues 1 to 21; it reads MPGVANSGPSTSSRETANPCS. Positions 7-19 are enriched in polar residues; sequence SGPSTSSRETANP. ANK repeat units follow at residues 25 to 60, 64 to 93, 97 to 126, 130 to 159, 163 to 192, 200 to 232, 235 to 265, 269 to 298, and 302 to 332; these read VHFG…DITH, RGWT…NLTA, RGCT…DPSV, REWR…SIED, NGNL…SATQ, NGEN…DLED, TLAF…NINE, NGST…DSNI, and AGER…DIDD.

This chain is Ankyrin repeat domain-containing protein 42 (ANKRD42), found in Homo sapiens (Human).